The chain runs to 711 residues: Zinc finger CCCH domain-containing protein 43 (711 aa).

The segment at 1 to 49 (MPQDDDWFWGRPTPVVVGDGETTSKPKPPVAGKTKKVEEQHPRRPGEPD) is disordered. Basic and acidic residues predominate over residues 35 to 47 (KKVEEQHPRRPGE). C3H1-type zinc fingers lie at residues 44–72 (RPGE…HPDP), 90–118 (RPGE…HPPR), and 157–185 (RPGT…HPDP). The region spanning 384–637 (LKTLKSILNT…GAISYLIEKE (254 aa)) is the MIF4G domain.

The sequence is that of Zinc finger CCCH domain-containing protein 43 from Oryza sativa subsp. japonica (Rice).